The sequence spans 291 residues: Elongation factor Ts (291 aa).

The involved in Mg(2+) ion dislocation from EF-Tu stretch occupies residues 79–82; sequence TDFV.

The protein belongs to the EF-Ts family.

Its subcellular location is the cytoplasm. Associates with the EF-Tu.GDP complex and induces the exchange of GDP to GTP. It remains bound to the aminoacyl-tRNA.EF-Tu.GTP complex up to the GTP hydrolysis stage on the ribosome. This is Elongation factor Ts from Roseobacter denitrificans (strain ATCC 33942 / OCh 114) (Erythrobacter sp. (strain OCh 114)).